A 199-amino-acid polypeptide reads, in one-letter code: Imidazoleglycerol-phosphate dehydratase (199 aa).

It belongs to the imidazoleglycerol-phosphate dehydratase family.

The protein localises to the cytoplasm. The catalysed reaction is D-erythro-1-(imidazol-4-yl)glycerol 3-phosphate = 3-(imidazol-4-yl)-2-oxopropyl phosphate + H2O. It functions in the pathway amino-acid biosynthesis; L-histidine biosynthesis; L-histidine from 5-phospho-alpha-D-ribose 1-diphosphate: step 6/9. This chain is Imidazoleglycerol-phosphate dehydratase, found in Bifidobacterium longum (strain NCC 2705).